Here is a 597-residue protein sequence, read N- to C-terminus: Aspartate--tRNA(Asp/Asn) ligase (597 aa).

An L-aspartate-binding site is contributed by glutamate 170. The interval 194-197 (QLFK) is aspartate. Arginine 216 contributes to the L-aspartate binding site. ATP contacts are provided by residues 216 to 218 (RDE) and glutamine 225. Histidine 448 lines the L-aspartate pocket. Glutamate 482 provides a ligand contact to ATP. Arginine 489 is a binding site for L-aspartate. ATP is bound at residue 534–537 (GWDR). The segment at 558–597 (GGGVDPLTDAPAPITAAQRKESGIDAKPEKAEKAGKPADA) is disordered. Over residues 575–597 (QRKESGIDAKPEKAEKAGKPADA) the composition is skewed to basic and acidic residues.

It belongs to the class-II aminoacyl-tRNA synthetase family. Type 1 subfamily. Homodimer.

The protein localises to the cytoplasm. The catalysed reaction is tRNA(Asx) + L-aspartate + ATP = L-aspartyl-tRNA(Asx) + AMP + diphosphate. Aspartyl-tRNA synthetase with relaxed tRNA specificity since it is able to aspartylate not only its cognate tRNA(Asp) but also tRNA(Asn). Reaction proceeds in two steps: L-aspartate is first activated by ATP to form Asp-AMP and then transferred to the acceptor end of tRNA(Asp/Asn). In Mycobacteroides abscessus (strain ATCC 19977 / DSM 44196 / CCUG 20993 / CIP 104536 / JCM 13569 / NCTC 13031 / TMC 1543 / L948) (Mycobacterium abscessus), this protein is Aspartate--tRNA(Asp/Asn) ligase.